The chain runs to 284 residues: 2-dehydro-3-deoxyphosphooctonate aldolase (284 aa).

The protein belongs to the KdsA family.

The protein resides in the cytoplasm. The catalysed reaction is D-arabinose 5-phosphate + phosphoenolpyruvate + H2O = 3-deoxy-alpha-D-manno-2-octulosonate-8-phosphate + phosphate. The protein operates within carbohydrate biosynthesis; 3-deoxy-D-manno-octulosonate biosynthesis; 3-deoxy-D-manno-octulosonate from D-ribulose 5-phosphate: step 2/3. It participates in bacterial outer membrane biogenesis; lipopolysaccharide biosynthesis. The sequence is that of 2-dehydro-3-deoxyphosphooctonate aldolase from Shigella boydii serotype 18 (strain CDC 3083-94 / BS512).